A 396-amino-acid chain; its full sequence is Tryptophan synthase beta chain (396 aa).

Lys-86 is modified (N6-(pyridoxal phosphate)lysine).

It belongs to the TrpB family. In terms of assembly, tetramer of two alpha and two beta chains. Pyridoxal 5'-phosphate is required as a cofactor.

It catalyses the reaction (1S,2R)-1-C-(indol-3-yl)glycerol 3-phosphate + L-serine = D-glyceraldehyde 3-phosphate + L-tryptophan + H2O. It participates in amino-acid biosynthesis; L-tryptophan biosynthesis; L-tryptophan from chorismate: step 5/5. Its function is as follows. The beta subunit is responsible for the synthesis of L-tryptophan from indole and L-serine. The protein is Tryptophan synthase beta chain of Francisella tularensis subsp. holarctica (strain FTNF002-00 / FTA).